Reading from the N-terminus, the 307-residue chain is Golgi to ER traffic protein 2 (307 aa).

Over 1 to 173 (MSDSTDSPAV…QAYDTYQQKL (173 aa)) the chain is Cytoplasmic. Residues 41 to 52 (LSQGSSVKTTGV) are compositionally biased toward polar residues. The tract at residues 41–73 (LSQGSSVKTTGVKSVLDEPQPTATSSAIHDEDP) is disordered. Residues 174–194 (WKSRFLVIRVVVTLFNFFYHY) form a helical membrane-spanning segment. The Lumenal portion of the chain corresponds to 195–220 (LNVPSFHASNYSYVRDLAQDEFPVRN). The helical transmembrane segment at 221–240 (FFTWFAAFEVIIVLQYYTVF) threads the bilayer. Over 241 to 284 (HKLGLFHAANQNSMIMKLMSMGSMVLPQLNTYQPLVARFLGYYE) the chain is Cytoplasmic. A helical transmembrane segment spans residues 285 to 305 (LFGIIFGDLSLVIVLFGLLSF). The Lumenal segment spans residues 306–307 (TK).

The protein belongs to the GET2 family. Component of the Golgi to ER traffic (GET) complex, which is composed of GET1, GET2 and GET3. Within the complex, GET1 and GET2 form a heterotetramer which is stabilized by phosphatidylinositol binding and which binds to the GET3 homodimer.

The protein resides in the endoplasmic reticulum membrane. Its subcellular location is the golgi apparatus membrane. Its function is as follows. Required for the post-translational delivery of tail-anchored (TA) proteins to the endoplasmic reticulum. Together with GET1, acts as a membrane receptor for soluble GET3, which recognizes and selectively binds the transmembrane domain of TA proteins in the cytosol. The GET complex cooperates with the HDEL receptor ERD2 to mediate the ATP-dependent retrieval of resident ER proteins that contain a C-terminal H-D-E-L retention signal from the Golgi to the ER. This Candida tropicalis (strain ATCC MYA-3404 / T1) (Yeast) protein is Golgi to ER traffic protein 2.